The primary structure comprises 579 residues: uncharacterized protein (579 aa).

The segment at 1–100 (MSGRRRNHPG…APPCGPYPGE (100 aa)) is disordered. A compositionally biased stretch (polar residues) spans 80-90 (GQQQSEPQHNS). 11 helical membrane-spanning segments follow: residues 148-168 (FAVD…AAAS), 175-195 (VALY…LIGP), 206-226 (VALA…IMNY), 228-248 (GATG…MMVL), 279-299 (VFGL…VEFV), 303-323 (LFKL…GALL), 378-398 (LWGN…PAFV), 407-427 (WVQL…NFAG), 448-468 (IAVT…MTTI), 504-524 (SEST…MVYT), and 526-546 (LWVG…QTVV).

It to M.tuberculosis Rv0876c.

Its subcellular location is the cell membrane. This is an uncharacterized protein from Mycobacterium leprae (strain TN).